A 179-amino-acid polypeptide reads, in one-letter code: UPF0316 protein BH0621 (179 aa).

3 consecutive transmembrane segments (helical) span residues 9–29 (ALTM…LFTV), 41–61 (LAAT…SLVL), and 67–87 (IENL…GMKV).

It belongs to the UPF0316 family.

The protein localises to the cell membrane. This Halalkalibacterium halodurans (strain ATCC BAA-125 / DSM 18197 / FERM 7344 / JCM 9153 / C-125) (Bacillus halodurans) protein is UPF0316 protein BH0621.